The following is a 116-amino-acid chain: Large ribosomal subunit protein bL19 (116 aa).

Belongs to the bacterial ribosomal protein bL19 family.

Its function is as follows. This protein is located at the 30S-50S ribosomal subunit interface and may play a role in the structure and function of the aminoacyl-tRNA binding site. This is Large ribosomal subunit protein bL19 from Pseudomonas fluorescens (strain Pf0-1).